Consider the following 827-residue polypeptide: Zinc finger protein 438 (827 aa).

Disordered stretches follow at residues 1–31 (MQNS…LQNK), 117–173 (LKLP…LYKP), and 193–232 (ALTN…AKQD). Polar residues-rich tracts occupy residues 16-31 (NIPS…LQNK) and 150-159 (PAQTQMCPQM). Residues 217 to 226 (PATPASPTPE) show a composition bias toward pro residues. C2H2-type zinc fingers lie at residues 506–528 (HRCH…MNTH), 534–556 (YSCR…MKLH), and 566–589 (MCCE…KEVH). The segment at 682 to 723 (FPGSKGTQEELVQHASHDWKRHPERGKPEKVHSSSEESHACP) is disordered. 2 stretches are compositionally biased toward basic and acidic residues: residues 688–699 (TQEELVQHASHD) and 706–721 (RGKP…ESHA). The C2H2-type 4 zinc-finger motif lies at 775–798 (FNCLLCAEMLGQKEDLLHHWKHQH).

The protein localises to the nucleus. In terms of biological role, acts as a transcriptional repressor. This Pongo abelii (Sumatran orangutan) protein is Zinc finger protein 438 (ZNF438).